The following is a 129-amino-acid chain: Lysozyme C (129 aa).

The C-type lysozyme domain occupies 1–129 (KVYGRCELAA…VHAWIRGCRL (129 aa)). 4 disulfide bridges follow: Cys6/Cys127, Cys30/Cys115, Cys64/Cys80, and Cys76/Cys94. Active-site residues include Glu35 and Asp52.

This sequence belongs to the glycosyl hydrolase 22 family. In terms of assembly, monomer.

Its subcellular location is the secreted. The catalysed reaction is Hydrolysis of (1-&gt;4)-beta-linkages between N-acetylmuramic acid and N-acetyl-D-glucosamine residues in a peptidoglycan and between N-acetyl-D-glucosamine residues in chitodextrins.. In terms of biological role, lysozymes have primarily a bacteriolytic function; those in tissues and body fluids are associated with the monocyte-macrophage system and enhance the activity of immunoagents. This is Lysozyme C (LYZ) from Tragopan temminckii (Temminck's tragopan).